Reading from the N-terminus, the 314-residue chain is UDP-N-acetylenolpyruvoylglucosamine reductase (314 aa).

The 178-residue stretch at 31-208 (RIGGPADYYA…LSARFRLTPK (178 aa)) folds into the FAD-binding PCMH-type domain. The active site involves R187. The Proton donor role is filled by S237. The active site involves E307.

The protein belongs to the MurB family. FAD serves as cofactor.

The protein resides in the cytoplasm. The enzyme catalyses UDP-N-acetyl-alpha-D-muramate + NADP(+) = UDP-N-acetyl-3-O-(1-carboxyvinyl)-alpha-D-glucosamine + NADPH + H(+). Its pathway is cell wall biogenesis; peptidoglycan biosynthesis. In terms of biological role, cell wall formation. In Agathobacter rectalis (strain ATCC 33656 / DSM 3377 / JCM 17463 / KCTC 5835 / VPI 0990) (Eubacterium rectale), this protein is UDP-N-acetylenolpyruvoylglucosamine reductase.